We begin with the raw amino-acid sequence, 251 residues long: POU class 2 homeobox associating factor 3 (251 aa).

Residues 5-27 (PKVYQGVRVKITVKELLQQRRAH) enclose the OCA domain. The disordered stretch occupies residues 24-45 (RRAHQAASGGTRSGGSSVHLSD). The segment covering 31–40 (SGGTRSGGSS) has biased composition (low complexity).

The protein belongs to the POU2AF family. As to quaternary structure, interacts with POU2F3 in a DNA-dependent manner; this interaction increases POU2F3 transactivation activity. Expressed in many cell types of epithelial, mesenchymal and hematopoietic origins. Expressed in tufs cells.

The protein resides in the cytoplasm. Its subcellular location is the nucleus. In terms of biological role, transcriptional coactivator that specifically associates with POU2F3. This complex drives the development of tuft cells, a rare a rare chemosensory cells that coordinate immune and neural functions within mucosal epithelial tissues. The polypeptide is POU class 2 homeobox associating factor 3 (Homo sapiens (Human)).